Here is a 217-residue protein sequence, read N- to C-terminus: 3,4-dihydroxy-2-butanone 4-phosphate synthase (217 aa).

Residues 37–38, aspartate 42, 150–154, and glutamate 174 each bind D-ribulose 5-phosphate; these read RE and RRGHT. Glutamate 38 serves as a coordination point for Mg(2+). Histidine 153 contributes to the Mg(2+) binding site.

It belongs to the DHBP synthase family. In terms of assembly, homodimer. Mg(2+) is required as a cofactor. The cofactor is Mn(2+).

It carries out the reaction D-ribulose 5-phosphate = (2S)-2-hydroxy-3-oxobutyl phosphate + formate + H(+). The protein operates within cofactor biosynthesis; riboflavin biosynthesis; 2-hydroxy-3-oxobutyl phosphate from D-ribulose 5-phosphate: step 1/1. In terms of biological role, catalyzes the conversion of D-ribulose 5-phosphate to formate and 3,4-dihydroxy-2-butanone 4-phosphate. In Desulforapulum autotrophicum (strain ATCC 43914 / DSM 3382 / VKM B-1955 / HRM2) (Desulfobacterium autotrophicum), this protein is 3,4-dihydroxy-2-butanone 4-phosphate synthase.